The chain runs to 88 residues: UPF0298 protein BA_4142/GBAA_4142/BAS3844 (88 aa).

This sequence belongs to the UPF0298 family.

Its subcellular location is the cytoplasm. This chain is UPF0298 protein BA_4142/GBAA_4142/BAS3844, found in Bacillus anthracis.